The sequence spans 68 residues: Large ribosomal subunit protein uL29 (68 aa).

It belongs to the universal ribosomal protein uL29 family.

The protein is Large ribosomal subunit protein uL29 of Chlorobaculum parvum (strain DSM 263 / NCIMB 8327) (Chlorobium vibrioforme subsp. thiosulfatophilum).